The chain runs to 206 residues: Elongation factor Ts (206 aa).

Positions 81 to 84 (TDFV) are involved in Mg(2+) ion dislocation from EF-Tu.

It belongs to the EF-Ts family.

The protein localises to the cytoplasm. In terms of biological role, associates with the EF-Tu.GDP complex and induces the exchange of GDP to GTP. It remains bound to the aminoacyl-tRNA.EF-Tu.GTP complex up to the GTP hydrolysis stage on the ribosome. The sequence is that of Elongation factor Ts from Maridesulfovibrio salexigens (strain ATCC 14822 / DSM 2638 / NCIMB 8403 / VKM B-1763) (Desulfovibrio salexigens).